The chain runs to 390 residues: Mannitol-1-phosphate 5-dehydrogenase (390 aa).

3-14 lines the NAD(+) pocket; sequence ALHFGAGNIGRG.

It belongs to the mannitol dehydrogenase family.

It carries out the reaction D-mannitol 1-phosphate + NAD(+) = beta-D-fructose 6-phosphate + NADH + H(+). The polypeptide is Mannitol-1-phosphate 5-dehydrogenase (Buchnera aphidicola subsp. Baizongia pistaciae (strain Bp)).